Consider the following 202-residue polypeptide: Orotate phosphoribosyltransferase (202 aa).

5-phospho-alpha-D-ribose 1-diphosphate is bound by residues Lys93 and 113 to 121; that span reads EDIITTGGS. Orotate-binding residues include Thr117 and Arg145.

The protein belongs to the purine/pyrimidine phosphoribosyltransferase family. PyrE subfamily. In terms of assembly, homodimer. Mg(2+) serves as cofactor.

The catalysed reaction is orotidine 5'-phosphate + diphosphate = orotate + 5-phospho-alpha-D-ribose 1-diphosphate. The protein operates within pyrimidine metabolism; UMP biosynthesis via de novo pathway; UMP from orotate: step 1/2. In terms of biological role, catalyzes the transfer of a ribosyl phosphate group from 5-phosphoribose 1-diphosphate to orotate, leading to the formation of orotidine monophosphate (OMP). This chain is Orotate phosphoribosyltransferase, found in Campylobacter jejuni subsp. jejuni serotype O:23/36 (strain 81-176).